A 355-amino-acid chain; its full sequence is Protein RecA (355 aa).

Glycine 78–threonine 85 provides a ligand contact to ATP.

It belongs to the RecA family.

The protein localises to the cytoplasm. Can catalyze the hydrolysis of ATP in the presence of single-stranded DNA, the ATP-dependent uptake of single-stranded DNA by duplex DNA, and the ATP-dependent hybridization of homologous single-stranded DNAs. It interacts with LexA causing its activation and leading to its autocatalytic cleavage. This Rhodobacter capsulatus (Rhodopseudomonas capsulata) protein is Protein RecA.